Consider the following 451-residue polypeptide: Bifunctional protein GlmU (451 aa).

Residues 1–236 (MDQTPSYSPP…YEELRGINSK (236 aa)) form a pyrophosphorylase region. Residues 17–20 (LAAG), Lys31, Gln79, 84–85 (GT), 105–107 (YGD), Gly144, Glu162, Asn177, and Asn234 contribute to the UDP-N-acetyl-alpha-D-glucosamine site. Residue Asp107 coordinates Mg(2+). Position 234 (Asn234) interacts with Mg(2+). Residues 237-257 (VELAEAEATVQIVLRRKALEN) form a linker region. An N-acetyltransferase region spans residues 258 to 451 (GVTMTAPETV…EIRRQLKGSV (194 aa)). UDP-N-acetyl-alpha-D-glucosamine contacts are provided by Arg323 and Lys341. His353 acts as the Proton acceptor in catalysis. Positions 356 and 367 each coordinate UDP-N-acetyl-alpha-D-glucosamine. Residues Ala370, 376–377 (NY), Ser395, Ala413, and Arg430 contribute to the acetyl-CoA site.

In the N-terminal section; belongs to the N-acetylglucosamine-1-phosphate uridyltransferase family. The protein in the C-terminal section; belongs to the transferase hexapeptide repeat family. In terms of assembly, homotrimer. Requires Mg(2+) as cofactor.

Its subcellular location is the cytoplasm. It catalyses the reaction alpha-D-glucosamine 1-phosphate + acetyl-CoA = N-acetyl-alpha-D-glucosamine 1-phosphate + CoA + H(+). The enzyme catalyses N-acetyl-alpha-D-glucosamine 1-phosphate + UTP + H(+) = UDP-N-acetyl-alpha-D-glucosamine + diphosphate. It participates in nucleotide-sugar biosynthesis; UDP-N-acetyl-alpha-D-glucosamine biosynthesis; N-acetyl-alpha-D-glucosamine 1-phosphate from alpha-D-glucosamine 6-phosphate (route II): step 2/2. The protein operates within nucleotide-sugar biosynthesis; UDP-N-acetyl-alpha-D-glucosamine biosynthesis; UDP-N-acetyl-alpha-D-glucosamine from N-acetyl-alpha-D-glucosamine 1-phosphate: step 1/1. It functions in the pathway bacterial outer membrane biogenesis; LPS lipid A biosynthesis. In terms of biological role, catalyzes the last two sequential reactions in the de novo biosynthetic pathway for UDP-N-acetylglucosamine (UDP-GlcNAc). The C-terminal domain catalyzes the transfer of acetyl group from acetyl coenzyme A to glucosamine-1-phosphate (GlcN-1-P) to produce N-acetylglucosamine-1-phosphate (GlcNAc-1-P), which is converted into UDP-GlcNAc by the transfer of uridine 5-monophosphate (from uridine 5-triphosphate), a reaction catalyzed by the N-terminal domain. This Granulibacter bethesdensis (strain ATCC BAA-1260 / CGDNIH1) protein is Bifunctional protein GlmU.